We begin with the raw amino-acid sequence, 250 residues long: Global transcriptional regulator CodY (250 aa).

Residues 1–147 (MSTLLEKTRK…GATVVGLEIL (147 aa)) are GAF domain. Positions 195–214 (ASKIADKVGITRSVIVNALR) form a DNA-binding region, H-T-H motif.

It belongs to the CodY family.

The protein localises to the cytoplasm. In terms of biological role, DNA-binding global transcriptional regulator which is involved in the adaptive response to starvation and acts by directly or indirectly controlling the expression of numerous genes in response to nutrient availability. During rapid exponential growth, CodY is highly active and represses genes whose products allow adaptation to nutrient depletion. This Thermoanaerobacter sp. (strain X514) protein is Global transcriptional regulator CodY.